The sequence spans 518 residues: Serine/threonine-protein kinase UL13 (518 aa).

Residues 1-119 (MDESRRQRPA…QAALTAPPSS (119 aa)) form a disordered region. The Protein kinase domain maps to 151 to 518 (PGARSFGGSG…TNPCARHALS (368 aa)). ATP-binding positions include 157 to 165 (GGSGGYGDV) and Lys-176. Residue Asp-277 is the Proton acceptor of the active site.

It belongs to the protein kinase superfamily. Ser/Thr protein kinase family. In terms of processing, autophosphorylated.

The protein localises to the virion tegument. It is found in the host nucleus. It catalyses the reaction L-seryl-[protein] + ATP = O-phospho-L-seryl-[protein] + ADP + H(+). The enzyme catalyses L-threonyl-[protein] + ATP = O-phospho-L-threonyl-[protein] + ADP + H(+). Its function is as follows. Multifunctional serine/threonine kinase that plays a role in several processes including egress of virus particles from the nucleus, modulation of the actin cytoskeleton and regulation of viral and cellular gene expression. Regulates the nuclear localization of viral envelopment factors UL34 and UL31, by phosphorylating the US3 kinase, indicating a role in nuclear egress. Disrupts host nuclear lamins, including LMNA and LMNB1. Phosphorylates the viral Fc receptor composed of glycoproteins E (gE) and I (gI). Phosphorylation of glycoprotein E (gE) by UL13 alters its subcellular localization, from the host early endosome to the plasma membrane. Participates in the transcriptional regulation of cellular and viral mRNAs mainly by phosphorylating the viral transcriptional regulator ICP22. Additional substrates have been identified, including UL41, UL49 or host EF1D. The chain is Serine/threonine-protein kinase UL13 from Homo sapiens (Human).